A 141-amino-acid polypeptide reads, in one-letter code: Putative pre-16S rRNA nuclease (141 aa).

This sequence belongs to the YqgF nuclease family.

It is found in the cytoplasm. Functionally, could be a nuclease involved in processing of the 5'-end of pre-16S rRNA. This chain is Putative pre-16S rRNA nuclease, found in Desulforudis audaxviator (strain MP104C).